The sequence spans 69 residues: Amphipathic peptide OcyC2 (69 aa).

Residues 1–23 (MKTQFAILMIAVVLMQMLVQTEG) form the signal peptide. Isoleucine 37 carries the isoleucine amide modification. Positions 41 to 69 (GLKKLDQLDDTFDSDLSDADVKLLREMFK) are excised as a propeptide.

Belongs to the non-disulfide-bridged peptide (NDBP) superfamily. Short antimicrobial peptide (group 4) family. As to expression, expressed by the venom gland.

Its subcellular location is the secreted. The protein localises to the target cell membrane. Amphipathic peptide with antimicrobial activity. Shows antifungal activity with MIC values ranging from 25 to 200 uM. Does not show antifungal activity against Candida glabrata (ATCC90030) and Candida parapsilosis (ATCC22019) (MIC&gt;400 uM). The chain is Amphipathic peptide OcyC2 from Opisthacanthus cayaporum (South American scorpion).